We begin with the raw amino-acid sequence, 540 residues long: Phosphatidylinositol 4-phosphate 5-kinase type-1 beta (540 aa).

A disordered region spans residues 1 to 21 (MSSAAENGEAAPGKQNEEKTY). A PIPK domain is found at 25–395 (ASSAIKGAIQ…RFLKFMNSRV (371 aa)). Phosphoserine is present on residues Ser-445, Ser-447, and Ser-448.

As to quaternary structure, interacts with RAC1, AJUBA, PLD1, PLD2 and ARF1. Detected in heart, pancreas, brain, kidney, skeletal muscle and lung.

The protein localises to the cytoplasm. The protein resides in the cytosol. Its subcellular location is the cell membrane. It localises to the endomembrane system. The enzyme catalyses a 1,2-diacyl-sn-glycero-3-phospho-(1D-myo-inositol 4-phosphate) + ATP = a 1,2-diacyl-sn-glycero-3-phospho-(1D-myo-inositol-4,5-bisphosphate) + ADP + H(+). It carries out the reaction 1-octadecanoyl-2-(5Z,8Z,11Z,14Z)-eicosatetraenoyl-sn-glycero-3-phospho-1D-myo-inositol 4-phosphate + ATP = 1-octadecanoyl-2-(5Z,8Z,11Z,14Z)-eicosatetraenoyl-sn-glycero-3-phospho-1D-myo-inositol 4,5-bisphosphate + ADP + H(+). It catalyses the reaction 1-octadecanoyl-2-(9Z)-octadecenoyl-sn-glycero-3-phospho-1D-myo-inositol 4-phosphate + ATP = 1-octadecanoyl-2-(9Z)-octadecenoyl-sn-glycero-3-phospho-1D-myo-inositol 4,5-bisphosphate + ADP + H(+). The catalysed reaction is 1-octadecanoyl-2-(9Z)-octadecenoyl-sn-glycero-3-phospho-1D-myo-inositol + ATP = 1-octadecanoyl-2-(9Z)-octadecenoyl-sn-glycero-3-phospho-1D-myo-inositol 5-phosphate + ADP + H(+). The enzyme catalyses 1-octadecanoyl-2-(9Z,12Z)-octadecadienoyl-sn-glycero-3-phospho-1D-myo-inositol + ATP = 1-octadecanoyl-2-(9Z,12Z)-octadecadienoyl-sn-glycero-3-phospho-1D-myo-inositol 5-phosphate + ADP + H(+). It carries out the reaction 1-octadecanoyl-2-(5Z,8Z,11Z,14Z-eicosatetraenoyl)-sn-glycero-3-phospho-(1D-myo-inositol) + ATP = 1-octadecanoyl-2-(5Z,8Z,11Z,14Z)-eicosatetraenoyl-sn-glycero-3-phospho-1D-myo-inositol 5-phosphate + ADP + H(+). It catalyses the reaction 1,2-di-(9Z,12Z)-octadecadienoyl-sn-glycero-3-phospho-1D-myo-inositol + ATP = 1,2-di(9Z,12Z)-octadecadienoyl-sn-glycero-3-phospho-1D-myo-inositol 5-phosphate + ADP + H(+). Its function is as follows. Catalyzes the phosphorylation of phosphatidylinositol 4-phosphate (PtdIns(4)P/PI4P) to form phosphatidylinositol 4,5-bisphosphate (PtdIns(4,5)P2/PIP2), a lipid second messenger that regulates several cellular processes such as signal transduction, vesicle trafficking, actin cytoskeleton dynamics, cell adhesion, and cell motility. PtdIns(4,5)P2 can directly act as a second messenger or can be utilized as a precursor to generate other second messengers: inositol 1,4,5-trisphosphate (IP3), diacylglycerol (DAG) or phosphatidylinositol-3,4,5-trisphosphate (PtdIns(3,4,5)P3/PIP3). Mediates RAC1-dependent reorganization of actin filaments. Contributes to the activation of phospholipase PLD2. Together with PIP5K1A, is required, after stimulation by G-protein coupled receptors, for the synthesis of IP3 that will induce stable platelet adhesion. This chain is Phosphatidylinositol 4-phosphate 5-kinase type-1 beta, found in Homo sapiens (Human).